The primary structure comprises 407 residues: Cell division protein FtsZ (407 aa).

GTP contacts are provided by residues 18-22 (GGGVN), 105-107 (GTG), Glu-136, Arg-140, and Asp-184. The interval 312-407 (FDGGQPPARR…EELDVPDFLK (96 aa)) is disordered. Composition is skewed to low complexity over residues 336-348 (AAPA…STRP) and 368-377 (APATASGESS). Pro residues predominate over residues 381-390 (VSPPHVPPAR). Acidic residues predominate over residues 396 to 407 (QAEELDVPDFLK).

This sequence belongs to the FtsZ family. As to quaternary structure, homodimer. Polymerizes to form a dynamic ring structure in a strictly GTP-dependent manner. Interacts directly with several other division proteins.

The protein localises to the cytoplasm. Essential cell division protein that forms a contractile ring structure (Z ring) at the future cell division site. The regulation of the ring assembly controls the timing and the location of cell division. One of the functions of the FtsZ ring is to recruit other cell division proteins to the septum to produce a new cell wall between the dividing cells. Binds GTP and shows GTPase activity. This chain is Cell division protein FtsZ, found in Streptomyces griseus.